Consider the following 452-residue polypeptide: Exodeoxyribonuclease 7 large subunit (452 aa).

It belongs to the XseA family. Heterooligomer composed of large and small subunits.

The protein localises to the cytoplasm. The catalysed reaction is Exonucleolytic cleavage in either 5'- to 3'- or 3'- to 5'-direction to yield nucleoside 5'-phosphates.. Its function is as follows. Bidirectionally degrades single-stranded DNA into large acid-insoluble oligonucleotides, which are then degraded further into small acid-soluble oligonucleotides. In Bacillus cereus (strain B4264), this protein is Exodeoxyribonuclease 7 large subunit.